The primary structure comprises 464 residues: tRNA(Ile)-lysidine synthase (464 aa).

30-35 (SGGVDS) is a binding site for ATP.

The protein belongs to the tRNA(Ile)-lysidine synthase family.

The protein resides in the cytoplasm. The enzyme catalyses cytidine(34) in tRNA(Ile2) + L-lysine + ATP = lysidine(34) in tRNA(Ile2) + AMP + diphosphate + H(+). Functionally, ligates lysine onto the cytidine present at position 34 of the AUA codon-specific tRNA(Ile) that contains the anticodon CAU, in an ATP-dependent manner. Cytidine is converted to lysidine, thus changing the amino acid specificity of the tRNA from methionine to isoleucine. This chain is tRNA(Ile)-lysidine synthase, found in Shewanella oneidensis (strain ATCC 700550 / JCM 31522 / CIP 106686 / LMG 19005 / NCIMB 14063 / MR-1).